The chain runs to 473 residues: Gamma-aminobutyric acid receptor subunit beta-3 (473 aa).

The N-terminal stretch at 1–25 is a signal peptide; the sequence is MWGLAGGRLFGIFSAPVLVAVVCCA. At 26-246 the chain is on the extracellular side; the sequence is QSVNDPGNMS…FRLKRNIGYF (221 aa). N-linked (GlcNAc...) asparagine glycosylation is found at asparagine 33 and asparagine 105. 120-122 provides a ligand contact to benzamidine; the sequence is DTY. A 4-aminobutanoate-binding site is contributed by tyrosine 122. Tyrosine 122 contributes to the histamine binding site. Cysteine 161 and cysteine 175 form a disulfide bridge. Asparagine 174 carries an N-linked (GlcNAc...) asparagine glycan. 4-aminobutanoate contacts are provided by glutamate 180 and tyrosine 182. Residues 180–182 and phenylalanine 225 each bind benzamidine; that span reads ESY. Position 181 to 182 (181 to 182) interacts with histamine; it reads SY. Residue threonine 227 coordinates 4-aminobutanoate. Position 227 (threonine 227) interacts with histamine. The chain crosses the membrane as a helical span at residues 247–267; the sequence is ILQTYMPSILITILSWVSFWI. At 268 to 271 the chain is on the cytoplasmic side; that stretch reads NYDA. Residues 272-292 form a helical membrane-spanning segment; that stretch reads SAARVALGITTVLTMTTINTH. The Extracellular portion of the chain corresponds to 293 to 304; sequence LRETLPKIPYVK. A helical membrane pass occupies residues 305–328; sequence AIDMYLMGCFVFVFLALLEYAFVN. Residues 329 to 447 lie on the Cytoplasmic side of the membrane; that stretch reads YIFFGRGPQR…KIPDLTDVNA (119 aa). Residues 448-470 traverse the membrane as a helical segment; the sequence is IDRWSRIVFPFTFSLFNLVYWLY. Over 471–473 the chain is Extracellular; it reads YVN.

This sequence belongs to the ligand-gated ion channel (TC 1.A.9) family. Gamma-aminobutyric acid receptor (TC 1.A.9.5) subfamily. GABRB3 sub-subfamily. As to quaternary structure, heteropentamer, formed by a combination of alpha (GABRA1-6), beta (GABRB1-3), gamma (GABRG1-3), delta (GABRD), epsilon (GABRE), rho (GABRR1-3), pi (GABRP) and theta (GABRQ) chains, each subunit exhibiting distinct physiological and pharmacological properties. Can form functional homopentamers (in vitro). Interacts with UBQLN1. May interact with KIF21B. Identified in a complex of 720 kDa composed of LHFPL4, NLGN2, GABRA1, GABRB2, GABRG2 and GABRB3. Interacts with LHFPL4. Interacts with GIT1; this interaction is required for synaptic GABRB3 surface stability and inhibitory synapse strength.

It localises to the postsynaptic cell membrane. It is found in the cell membrane. The protein resides in the cytoplasmic vesicle membrane. It catalyses the reaction chloride(in) = chloride(out). Potentiated by histamine. Functionally, beta subunit of the heteropentameric ligand-gated chloride channel gated by gamma-aminobutyric acid (GABA), a major inhibitory neurotransmitter in the brain. GABA-gated chloride channels, also named GABA(A) receptors (GABAAR), consist of five subunits arranged around a central pore and contain GABA active binding site(s) located at the alpha and beta subunit interface(s). GABAARs containing beta-3/GABRB3 subunit are found at both synaptic and extrasynaptic sites. When activated by GABA, GABAARs selectively allow the flow of chloride anions across the cell membrane down their electrochemical gradient. Chloride influx into the postsynaptic neuron following GABAAR opening decreases the neuron ability to generate a new action potential, thereby reducing nerve transmission. GABAARs containing alpha-1 and beta-3 subunits exhibit synaptogenic activity; the gamma-2 subunit being necessary but not sufficient to induce rapid synaptic contacts formation. Extrasynaptic beta-3 receptors contribute to the tonic GABAergic inhibition. GABAARs containing alpha-1, beta-3 and epsilon subunits may also permit spontaneous chloride channel activity while preserving the structural information required for GABA-gated openings. Beta-containing GABAARs can simultaneously bind GABA and histamine where histamine binds at the interface of two neighboring beta subunits, which may be involved in the regulation of sleep and wakefulness. Plays an important role in somatosensation and in the production of antinociception. This Homo sapiens (Human) protein is Gamma-aminobutyric acid receptor subunit beta-3.